Reading from the N-terminus, the 237-residue chain is Concanavalin-A (237 aa).

Positions 8 and 10 each coordinate Mn(2+). Positions 10, 12, 14, and 19 each coordinate Ca(2+). Y12 contributes to the a carbohydrate binding site. Residues D19 and H24 each coordinate Mn(2+). A carbohydrate is bound at residue L99–Y100. D208 is a binding site for Ca(2+). R228 is a binding site for a carbohydrate.

It belongs to the leguminous lectin family. As to quaternary structure, homotetramer.

Its function is as follows. Glucose/D-mannose specific lectin. The protein is Concanavalin-A of Canavalia lineata (Beach bean).